The primary structure comprises 400 residues: Pectinesterase B (400 aa).

Substrate-binding residues include T171 and Q205. The active-site Proton donor is D228. D261 serves as the catalytic Nucleophile. 2 residues coordinate substrate: R325 and W327.

Belongs to the pectinesterase family.

The catalysed reaction is [(1-&gt;4)-alpha-D-galacturonosyl methyl ester](n) + n H2O = [(1-&gt;4)-alpha-D-galacturonosyl](n) + n methanol + n H(+). It participates in glycan metabolism; pectin degradation; 2-dehydro-3-deoxy-D-gluconate from pectin: step 1/5. The sequence is that of Pectinesterase B (pemB) from Pectobacterium parmentieri.